The following is a 370-amino-acid chain: NSFL1 cofactor p47 (370 aa).

The tract at residues 54–73 (SQATPSSVSRGTAPSDNRVT) is disordered. Phosphoserine is present on residues serine 74, serine 102, and serine 114. 2 disordered regions span residues 80–116 (HDQD…KSPN) and 138–157 (TKSP…GYRL). The Nuclear localization signal motif lies at 109-115 (PPRKKSP). The residue at position 140 (serine 140) is a Phosphoserine; by CDK1. Residue tyrosine 167 is modified to Phosphotyrosine. Residues 172–175 (RRRH) carry the Nuclear localization signal motif. Residues serine 176, serine 192, and serine 272 each carry the phosphoserine modification. One can recognise an SEP domain in the interval 179-244 (DVHVVLKLWK…MEDHRDEDFV (66 aa)). Residues 291-368 (EAEPTTNIQI…NLLNAVIVQR (78 aa)) enclose the UBX domain.

It belongs to the NSFL1C family. As to quaternary structure, part of a ternary complex containing STX5A, NSFL1C and VCP. NSFL1C forms a homotrimer that binds to one end of a VCP homohexamer. The complex binds to membranes enriched in phosphatidylethanolamine-containing lipids and promotes Golgi membrane fusion. Interaction with VCIP135 leads to dissociation of the complex via ATP hydrolysis by VCP. Binds ubiquitin and mono-ubiquitinated proteins via its N-terminal UBA-like domain when bound to VCP. Post-translationally, phosphorylated during mitosis. Phosphorylation inhibits interaction with Golgi membranes and is required for the fragmentation of the Golgi stacks during mitosis. In terms of tissue distribution, highly expressed in heart, brain, spleen, lung, liver, muscle, kidney and testis.

Its subcellular location is the nucleus. It localises to the golgi apparatus. The protein localises to the golgi stack. The protein resides in the chromosome. It is found in the cytoplasm. Its subcellular location is the cytoskeleton. It localises to the microtubule organizing center. The protein localises to the centrosome. In terms of biological role, reduces the ATPase activity of VCP. Necessary for the fragmentation of Golgi stacks during mitosis and for VCP-mediated reassembly of Golgi stacks after mitosis. May play a role in VCP-mediated formation of transitional endoplasmic reticulum (tER). Inhibits the activity of CTSL (in vitro). Together with UBXN2B/p37, regulates the centrosomal levels of kinase AURKA/Aurora A during mitotic progression by promoting AURKA removal from centrosomes in prophase. Also, regulates spindle orientation during mitosis. In Rattus norvegicus (Rat), this protein is NSFL1 cofactor p47 (Nsfl1c).